The chain runs to 487 residues: N-succinylglutamate 5-semialdehyde dehydrogenase (487 aa).

Position 221 to 226 (221 to 226) interacts with NAD(+); that stretch reads GSSDTG. Residues Glu-244 and Cys-278 contribute to the active site.

This sequence belongs to the aldehyde dehydrogenase family. AstD subfamily.

The catalysed reaction is N-succinyl-L-glutamate 5-semialdehyde + NAD(+) + H2O = N-succinyl-L-glutamate + NADH + 2 H(+). Its pathway is amino-acid degradation; L-arginine degradation via AST pathway; L-glutamate and succinate from L-arginine: step 4/5. Catalyzes the NAD-dependent reduction of succinylglutamate semialdehyde into succinylglutamate. This chain is N-succinylglutamate 5-semialdehyde dehydrogenase, found in Burkholderia cenocepacia (strain HI2424).